We begin with the raw amino-acid sequence, 260 residues long: Hemin import ATP-binding protein HmuV (260 aa).

The ABC transporter domain maps to 2–239 (IRAENITLIR…ETIARVYGIG (238 aa)). 34 to 41 (GPNGAGKS) serves as a coordination point for ATP.

This sequence belongs to the ABC transporter superfamily. Heme (hemin) importer (TC 3.A.1.14.5) family. The complex is composed of two ATP-binding proteins (HmuV), two transmembrane proteins (HmuU) and a solute-binding protein (HmuT).

It is found in the cell inner membrane. Its function is as follows. Part of the ABC transporter complex HmuTUV involved in hemin import. Responsible for energy coupling to the transport system. The protein is Hemin import ATP-binding protein HmuV of Agrobacterium fabrum (strain C58 / ATCC 33970) (Agrobacterium tumefaciens (strain C58)).